Consider the following 238-residue polypeptide: tRNA (guanine-N(7)-)-methyltransferase (238 aa).

The S-adenosyl-L-methionine site is built by Glu68, Glu93, Asp120, and Asp143. Residue Asp143 is part of the active site. Residues Lys147, Asp179, and 216 to 219 (TKFE) each bind substrate.

It belongs to the class I-like SAM-binding methyltransferase superfamily. TrmB family.

It carries out the reaction guanosine(46) in tRNA + S-adenosyl-L-methionine = N(7)-methylguanosine(46) in tRNA + S-adenosyl-L-homocysteine. It participates in tRNA modification; N(7)-methylguanine-tRNA biosynthesis. Its function is as follows. Catalyzes the formation of N(7)-methylguanine at position 46 (m7G46) in tRNA. This Stutzerimonas stutzeri (strain A1501) (Pseudomonas stutzeri) protein is tRNA (guanine-N(7)-)-methyltransferase.